A 409-amino-acid chain; its full sequence is Peptidase T (409 aa).

H79 is a binding site for Zn(2+). D81 is an active-site residue. D140 serves as a coordination point for Zn(2+). The active-site Proton acceptor is the E174. Residues E175, D197, and H379 each coordinate Zn(2+).

This sequence belongs to the peptidase M20B family. Zn(2+) serves as cofactor.

The protein localises to the cytoplasm. The enzyme catalyses Release of the N-terminal residue from a tripeptide.. Functionally, cleaves the N-terminal amino acid of tripeptides. The protein is Peptidase T of Lysinibacillus sphaericus (strain C3-41).